A 467-amino-acid chain; its full sequence is MKITALASAILAVVHGALALPARAPALDITLSQVNNTRIKAVVKNSGSEKITFVHLNFFNDPSPVKKVSLYRNATEVEFTGIKQRLRSDGLSNEALTTLAPGATYEDEFDIASTANLTQGGPVTVRTQGFVPIAMNNKIAGYIPYSSNELELEVDAVKAVAVPASIKPLDRRTKITSSCTGDRAAVLNTALRNAASIAGKAANAASSGSSALFAEYFKSTSGNIRSAVAARLKAVASEASLNGGGSTTYYCSDPYGYCDSNVLAYTLPSTNEVVNCELFYTLQEVTNDCHGQDQATTIIHEFTHAPGVYPPGTEDLGYGYSAATALSANNALNNADSYALFANAVYLNCQGQTGGQTMWDGNSQPGQTAPGTQTMWDGNSQPGQTEPGTQTMWDGNSQPGQTEPGTQTMWDGNSQPGQTEPGTQTMWDGNSQPGQTEPCTQTMWDGSSEPGQTEPDAHTTWGNFYQA.

A signal peptide spans 1-19 (MKITALASAILAVVHGALA). Positions 20-172 (LPARAPALDI…PASIKPLDRR (153 aa)) are excised as a propeptide. 2 cysteine pairs are disulfide-bonded: Cys179-Cys251 and Cys258-Cys276. His300 serves as a coordination point for Zn(2+). The active site involves Glu301. His304 and Asp315 together coordinate Zn(2+). The span at 359–451 (WDGNSQPGQT…TMWDGSSEPG (93 aa)) shows a compositional bias: polar residues. Residues 359–467 (WDGNSQPGQT…HTTWGNFYQA (109 aa)) form a disordered region.

The protein belongs to the peptidase M35 family. Requires Zn(2+) as cofactor.

It is found in the secreted. It carries out the reaction Preferential cleavage of bonds with hydrophobic residues in P1'. Also 3-Asn-|-Gln-4 and 8-Gly-|-Ser-9 bonds in insulin B chain.. Secreted metalloproteinase that allows assimilation of proteinaceous substrates. Shows high activities on basic nuclear substrates such as histone and protamine. The protein is Neutral protease 2 homolog NFIA_031120 of Neosartorya fischeri (strain ATCC 1020 / DSM 3700 / CBS 544.65 / FGSC A1164 / JCM 1740 / NRRL 181 / WB 181) (Aspergillus fischerianus).